Consider the following 558-residue polypeptide: Putative transport protein VC0395_A0715/VC395_1212 (558 aa).

A run of 5 helical transmembrane segments spans residues Val-5–Leu-25, Leu-37–Phe-57, Phe-66–Phe-86, Tyr-92–Tyr-112, and Val-164–Leu-184. 2 consecutive RCK C-terminal domains span residues Arg-203–Gly-290 and Lys-291–Phe-374. 6 helical membrane-spanning segments follow: residues Leu-384–Phe-404, Val-407–Leu-427, Ala-441–Ala-461, Val-476–Ala-496, Ala-504–Asn-524, and Ala-537–Leu-557.

The protein belongs to the AAE transporter (TC 2.A.81) family. YbjL subfamily.

It is found in the cell membrane. This chain is Putative transport protein VC0395_A0715/VC395_1212, found in Vibrio cholerae serotype O1 (strain ATCC 39541 / Classical Ogawa 395 / O395).